A 328-amino-acid chain; its full sequence is Cell cycle control protein 50A (328 aa).

The segment at 1-28 is disordered; sequence MAMNYSAKDEVDGGPTGPPGGAAKTRRP. The residue at position 2 (Ala2) is an N-acetylalanine. The interval 2 to 48 is required for ATPase and aminophospholipid flippase activity; it reads AMNYSAKDEVDGGPTGPPGGAAKTRRPDNTAFKQQRLPAWQPILTAG. The Cytoplasmic segment spans residues 2–49; that stretch reads AMNYSAKDEVDGGPTGPPGGAAKTRRPDNTAFKQQRLPAWQPILTAGT. The interaction with ATP8A2 stretch occupies residues 49 to 315; sequence TVLPTFFIIG…LGVVLLVINH (267 aa). A helical transmembrane segment spans residues 50-70; that stretch reads VLPTFFIIGLIFIPIGIGIFV. Residues 71 to 292 are Exoplasmic loop-facing; the sequence is TSNNIREIEG…SWMGGKNPFL (222 aa). Residues 102-125 are disordered; it reads RDDSQLNGDPSALLNPSKECEPYR. A disulfide bond links Cys121 and Cys135. Residues Asn144 and Asn261 are each glycosylated (N-linked (GlcNAc...) asparagine). A helical transmembrane segment spans residues 293–313; it reads GIAYITIGSISFLLGVVLLVI. Residues 314 to 328 lie on the Cytoplasmic side of the membrane; that stretch reads NHKYRNSSNTADITI.

It belongs to the CDC50/LEM3 family. Component of various P4-ATPase flippase complexes which consists of a catalytic alpha subunit and an accessory beta subunit. Interacts with ATP8A1 to form a flippase complex; this complex forms an intermediate phosphoenzyme. Interacts with ATP8A2 to form a flippase complex. TP8B1:TMEM30A and ATP8B2:TMEM30A flippase complexes have been shown to form intermediate phosphoenzymes in vitro. Interacts with alpha subunits ATP8A1, ATP8B1, ATP8B2, ATP8B4, ATP10A, ATP10B, ATP10D, ATP11A, ATP11B and ATP11C. Post-translationally, N-glycosylated. Contains high mannose-type oligosaccharides.

The protein localises to the membrane. Its subcellular location is the golgi apparatus. The protein resides in the cytoplasmic vesicle. It is found in the secretory vesicle membrane. It localises to the apical cell membrane. The protein localises to the photoreceptor inner segment. Its subcellular location is the cell projection. The protein resides in the cilium. It is found in the photoreceptor outer segment. Its function is as follows. Accessory component of a P4-ATPase flippase complex which catalyzes the hydrolysis of ATP coupled to the transport of aminophospholipids from the outer to the inner leaflet of various membranes and ensures the maintenance of asymmetric distribution of phospholipids. Phospholipid translocation also seems to be implicated in vesicle formation and in uptake of lipid signaling molecules. The beta subunit may assist in binding of the phospholipid substrate. Required for the proper folding, assembly and ER to Golgi exit of the ATP8A2:TMEM30A flippase complex. ATP8A2:TMEM30A may be involved in regulation of neurite outgrowth, and, reconstituted to liposomes, predomiminantly transports phosphatidylserine (PS) and to a lesser extent phosphatidylethanolamine (PE). The ATP8A1:TMEM30A flippase complex seems to play a role in regulation of cell migration probably involving flippase-mediated translocation of phosphatidylethanolamine (PE) at the plasma membrane. Required for the formation of the ATP8A2, ATP8B1 and ATP8B2 P-type ATPAse intermediate phosphoenzymes. Involved in uptake of platelet-activating factor (PAF). Can also mediate the export of alpha subunits ATP8A1, ATP8B1, ATP8B2, ATP8B4, ATP10A, ATP10B, ATP10D, ATP11A, ATP11B and ATP11C from ER to other membrane localizations. This is Cell cycle control protein 50A from Rattus norvegicus (Rat).